The sequence spans 172 residues: Probable tryptophan transport protein (172 aa).

4 helical membrane-spanning segments follow: residues 7 to 29 (VIMA…FLGG), 49 to 71 (VQNV…AFPA), 104 to 126 (AVLT…LLIV), and 136 to 158 (FAAV…YPIV).

This sequence belongs to the vitamin uptake transporter (VUT/ECF) (TC 2.A.88) family. TrpP subfamily.

The protein localises to the cell membrane. Its function is as follows. Probably involved in tryptophan uptake. The polypeptide is Probable tryptophan transport protein (trpP) (Bacillus subtilis (strain 168)).